The following is a 624-amino-acid chain: DNA damage response protein Mdb1 (624 aa).

Disordered stretches follow at residues 177-237, 249-386, and 591-624; these read ERIP…DDES, GETK…KNKH, and IGKRNVSKASRTGQGRKRSSRSSWNKPSAKEQRT. Basic and acidic residues-rich tracts occupy residues 200 to 217 and 225 to 235; these read DEKLVLDGQHVEGDHSSD and EDQKQLNKTDD. A compositionally biased stretch (polar residues) spans 250-263; it reads ETKSPSSVSQSLSG. 2 positions are modified to phosphoserine: Ser253 and Ser283. Residues 294–305 are compositionally biased toward low complexity; the sequence is NISDSSIKNNSI. 2 stretches are compositionally biased toward basic and acidic residues: residues 306–316 and 325–352; these read HSDEVNPEVRP and EESKRSAPEIALKEKESTSQDESNREAE. Residues 356–386 are compositionally biased toward polar residues; sequence ISTNYSFPSSSLEDQPDKNVQSSAVENKNKH. The 93-residue stretch at 376–468 folds into the BRCT domain; sequence QSSAVENKNK…KVLDFRSYKY (93 aa).

Homodimer. Interacts (via BRCT domain) with hta1 peptide containing the S/T-Q motif in vitro; this interaction requires phosphorylation of the hta1 peptide at the S/T-Q motif.

It is found in the nucleus. It localises to the chromosome. Its subcellular location is the cytoplasm. The protein resides in the cytoskeleton. The protein localises to the spindle. In terms of biological role, involved in DNA damage response (DDR) mediated through its interaction with phosphorylated H2A proteins hta1 and hta2 which mark the discrete foci of DNA damage. This is DNA damage response protein Mdb1 from Schizosaccharomyces pombe (strain 972 / ATCC 24843) (Fission yeast).